A 71-amino-acid chain; its full sequence is Conotoxin Tx11.3 (71 aa).

The N-terminal stretch at 1–19 is a signal peptide; that stretch reads MKLCVTFLLVLVILPSVTG. Positions 20–47 are excised as a propeptide; that stretch reads VKSSERTLSGAALRGDRGTCSGRGQECK. Disulfide bonds link cysteine 39/cysteine 53, cysteine 46/cysteine 58, cysteine 52/cysteine 63, and cysteine 57/cysteine 70.

Belongs to the I1 superfamily. Expressed by the venom duct.

The protein resides in the secreted. This Conus textile (Cloth-of-gold cone) protein is Conotoxin Tx11.3.